We begin with the raw amino-acid sequence, 260 residues long: Ribosome maturation factor RimP (260 aa).

Composition is skewed to basic and acidic residues over residues 189-199 and 215-227; these read RRGRDAEREQL and AREM…PRKE. The tract at residues 189–260 is disordered; that stretch reads RRGRDAEREQ…QTTSDPHQGE (72 aa). A compositionally biased stretch (basic residues) spans 228 to 242; that stretch reads KTAKKPLPKNTKAHR.

Belongs to the RimP family.

It localises to the cytoplasm. Functionally, required for maturation of 30S ribosomal subunits. The protein is Ribosome maturation factor RimP of Afipia carboxidovorans (strain ATCC 49405 / DSM 1227 / KCTC 32145 / OM5) (Oligotropha carboxidovorans).